Reading from the N-terminus, the 135-residue chain is Probable disulfide formation protein (135 aa).

Residues 7 to 26 (SYCLYLAWLFSCIGTLMSVY) form a helical membrane-spanning segment. Cysteines 36 and 39 form a disulfide. The next 2 membrane-spanning stretches (helical) occupy residues 41 to 60 (YQRICLFPLVVILGIAAYRE) and 67 to 84 (YTLPLALVGFGIAIYQVC). C96 and C101 form a disulfide bridge. Residues 109-131 (GFITMPMASAAAFCAIACLLVLA) traverse the membrane as a helical segment.

Belongs to the DsbB family. BdbC subfamily.

It is found in the cell inner membrane. Required for disulfide bond formation in some proteins. This is Probable disulfide formation protein from Chlamydia trachomatis serovar D (strain ATCC VR-885 / DSM 19411 / UW-3/Cx).